The primary structure comprises 369 residues: O-methyltransferase 12 (369 aa).

Residues Gly181, Asp204, 229 to 231 (GDF), Asp230, Phe231, and Lys244 each bind S-adenosyl-L-methionine. His248 functions as the Proton acceptor in the catalytic mechanism.

Belongs to the class I-like SAM-binding methyltransferase superfamily. Cation-independent O-methyltransferase family. COMT subfamily.

The enzyme catalyses resorcinol + S-adenosyl-L-methionine = 3-methoxyphenol + S-adenosyl-L-homocysteine + H(+). Functionally, S-adenosyl-L-methionine dependent O-methyltransferase that may be involved in modifying resorcinol ring to synthesize a variant of 4-methyl-5-pentylbenzene-1,3-diol. The protein is O-methyltransferase 12 (omt12) of Dictyostelium discoideum (Social amoeba).